The sequence spans 440 residues: Cytochrome c biogenesis protein Ccs1 (440 aa).

Helical transmembrane passes span 19–39 (LRLA…GTFI), 78–98 (NIWF…CTYT), and 164–184 (VGPI…ACGA).

It belongs to the Ccs1/CcsB family. As to quaternary structure, may interact with CcsA.

Its subcellular location is the plastid. The protein resides in the chloroplast thylakoid membrane. Its function is as follows. Required during biogenesis of c-type cytochromes (cytochrome c6 and cytochrome f) at the step of heme attachment. The chain is Cytochrome c biogenesis protein Ccs1 from Emiliania huxleyi (Coccolithophore).